We begin with the raw amino-acid sequence, 405 residues long: Tryptophan synthase beta chain (405 aa).

The residue at position 98 (lysine 98) is an N6-(pyridoxal phosphate)lysine.

Belongs to the TrpB family. In terms of assembly, tetramer of two alpha and two beta chains. The cofactor is pyridoxal 5'-phosphate.

It carries out the reaction (1S,2R)-1-C-(indol-3-yl)glycerol 3-phosphate + L-serine = D-glyceraldehyde 3-phosphate + L-tryptophan + H2O. The protein operates within amino-acid biosynthesis; L-tryptophan biosynthesis; L-tryptophan from chorismate: step 5/5. The beta subunit is responsible for the synthesis of L-tryptophan from indole and L-serine. This Xanthomonas oryzae pv. oryzae (strain PXO99A) protein is Tryptophan synthase beta chain.